A 329-amino-acid chain; its full sequence is MPEGPSVRKFHHLVSPFVGQKVVKTGGSSKKLHPAAFQSLWLQDAQVHGKKLFLRFDPDEEMEPLNSSPQPIQGMWQKEAVDRELALGPSAQEPSAGPSGSGEPVPSRSAETYNLGKIPSADAQRWLEVRFGLFGSIWVNDFSRAKKANKKGDWRDPVPRLVLHFSGGGFLVFYNCQMSWSPPPVIEPTCDILSEKFHRGQALEALSQAQPVCYTLLDQRYFSGLGNIIKNEALYRARIHPLSLGSCLSSSSREALVDHVVEFSKDWLRDKFQGKERHTQIYQKEQCPSGHQVMKETFGPPDGLQRLTWWCPQCQPQLSSKGPQNLPSS.

Catalysis depends on Pro-2, which acts as the Schiff-base intermediate with DNA. Glu-3 functions as the Proton donor in the catalytic mechanism. Lys-50 acts as the Proton donor; for beta-elimination activity in catalysis. The residue at position 50 (Lys-50) is an N6-acetyllysine. Ser-68 carries the phosphoserine modification. The interval 88–112 is disordered; sequence GPSAQEPSAGPSGSGEPVPSRSAET. Lys-150 is modified (N6-acetyllysine). Asn-227 contacts DNA. The FPG-type zinc finger occupies 280 to 316; sequence QIYQKEQCPSGHQVMKETFGPPDGLQRLTWWCPQCQP. The active-site Proton donor; for delta-elimination activity is the Arg-306.

Belongs to the FPG family. In terms of assembly, binds EP300.

It is found in the nucleus. It catalyses the reaction 2'-deoxyribonucleotide-(2'-deoxyribose 5'-phosphate)-2'-deoxyribonucleotide-DNA = a 3'-end 2'-deoxyribonucleotide-(2,3-dehydro-2,3-deoxyribose 5'-phosphate)-DNA + a 5'-end 5'-phospho-2'-deoxyribonucleoside-DNA + H(+). With respect to regulation, acetylation of Lys-50 leads to loss of DNA nicking activity. Functionally, involved in base excision repair of DNA damaged by oxidation or by mutagenic agents. Has DNA glycosylase activity towards 5-hydroxyuracil and other oxidized derivatives of cytosine with a preference for mismatched double-stranded DNA (DNA bubbles). Has low or no DNA glycosylase activity towards thymine glycol, 2-hydroxyadenine, hypoxanthine and 8-oxoguanine. Has AP (apurinic/apyrimidinic) lyase activity and introduces nicks in the DNA strand. Cleaves the DNA backbone by beta-delta elimination to generate a single-strand break at the site of the removed base with both 3'- and 5'-phosphates. This Mus musculus (Mouse) protein is Endonuclease 8-like 2 (Neil2).